A 407-amino-acid chain; its full sequence is Argininosuccinate synthase (407 aa).

ATP contacts are provided by residues 12-20 and Ala-39; that span reads AFSGGLDTS. L-citrulline is bound by residues Tyr-90 and Ser-95. Gly-120 is a binding site for ATP. L-aspartate-binding residues include Thr-122, Asn-126, and Asp-127. Asn-126 contributes to the L-citrulline binding site. L-citrulline is bound by residues Arg-130, Ser-181, Ser-190, Glu-266, and Tyr-278.

The protein belongs to the argininosuccinate synthase family. Type 1 subfamily. Homotetramer.

The protein localises to the cytoplasm. The enzyme catalyses L-citrulline + L-aspartate + ATP = 2-(N(omega)-L-arginino)succinate + AMP + diphosphate + H(+). Its pathway is amino-acid biosynthesis; L-arginine biosynthesis; L-arginine from L-ornithine and carbamoyl phosphate: step 2/3. The polypeptide is Argininosuccinate synthase (Nitrosospira multiformis (strain ATCC 25196 / NCIMB 11849 / C 71)).